The following is a 79-amino-acid chain: Small ribosomal subunit protein bS18 (79 aa).

This sequence belongs to the bacterial ribosomal protein bS18 family. Part of the 30S ribosomal subunit. Forms a tight heterodimer with protein bS6.

Binds as a heterodimer with protein bS6 to the central domain of the 16S rRNA, where it helps stabilize the platform of the 30S subunit. In Salinispora arenicola (strain CNS-205), this protein is Small ribosomal subunit protein bS18.